The sequence spans 83 residues: Large ribosomal subunit protein bL27c (83 aa).

Residues 1 to 24 form a disordered region; it reads MAHKKGAGSTKNGRDSNAKRLGVK.

The protein belongs to the bacterial ribosomal protein bL27 family.

Its subcellular location is the plastid. The protein localises to the chloroplast. This Trieres chinensis (Marine centric diatom) protein is Large ribosomal subunit protein bL27c (rpl27).